Reading from the N-terminus, the 388-residue chain is Succinate--CoA ligase [ADP-forming] subunit beta (388 aa).

Residues 9 to 244 form the ATP-grasp domain; that stretch reads KQLFAEYGLP…PSQDDAREAH (236 aa). Residues K46, 53 to 55, E99, T102, and E107 each bind ATP; that span reads GRG. Mg(2+) contacts are provided by N199 and D213. Residues N264 and 321-323 each bind substrate; that span reads GIV.

It belongs to the succinate/malate CoA ligase beta subunit family. As to quaternary structure, heterotetramer of two alpha and two beta subunits. Mg(2+) serves as cofactor.

The enzyme catalyses succinate + ATP + CoA = succinyl-CoA + ADP + phosphate. It carries out the reaction GTP + succinate + CoA = succinyl-CoA + GDP + phosphate. It functions in the pathway carbohydrate metabolism; tricarboxylic acid cycle; succinate from succinyl-CoA (ligase route): step 1/1. Functionally, succinyl-CoA synthetase functions in the citric acid cycle (TCA), coupling the hydrolysis of succinyl-CoA to the synthesis of either ATP or GTP and thus represents the only step of substrate-level phosphorylation in the TCA. The beta subunit provides nucleotide specificity of the enzyme and binds the substrate succinate, while the binding sites for coenzyme A and phosphate are found in the alpha subunit. The protein is Succinate--CoA ligase [ADP-forming] subunit beta of Pseudomonas paraeruginosa (strain DSM 24068 / PA7) (Pseudomonas aeruginosa (strain PA7)).